A 555-amino-acid polypeptide reads, in one-letter code: Urocanate hydratase (555 aa).

NAD(+) is bound by residues G51–G52, Q129, G175–G177, E195, Q262–H266, Y272–L273, and Y321. The active site involves C409. NAD(+) is bound at residue G491.

The protein belongs to the urocanase family. NAD(+) serves as cofactor.

It is found in the cytoplasm. The catalysed reaction is 4-imidazolone-5-propanoate = trans-urocanate + H2O. It functions in the pathway amino-acid degradation; L-histidine degradation into L-glutamate; N-formimidoyl-L-glutamate from L-histidine: step 2/3. Catalyzes the conversion of urocanate to 4-imidazolone-5-propionate. The polypeptide is Urocanate hydratase (Xanthomonas axonopodis pv. citri (strain 306)).